We begin with the raw amino-acid sequence, 131 residues long: Transcription antitermination protein NusB (131 aa).

It belongs to the NusB family.

Involved in transcription antitermination. Required for transcription of ribosomal RNA (rRNA) genes. Binds specifically to the boxA antiterminator sequence of the ribosomal RNA (rrn) operons. The chain is Transcription antitermination protein NusB from Bacillus pumilus (strain SAFR-032).